A 473-amino-acid chain; its full sequence is Bifunctional protein GlmU (473 aa).

Positions 1-241 are pyrophosphorylase; it reads MATQPTPLTA…VGSLVGINDR (241 aa). Residues 13-16, Lys-27, Gln-84, and 89-90 contribute to the UDP-N-acetyl-alpha-D-glucosamine site; these read LAAG and GT. Asp-114 is a binding site for Mg(2+). Residues Gly-152, Glu-167, Asn-182, and Asn-239 each coordinate UDP-N-acetyl-alpha-D-glucosamine. Residue Asn-239 coordinates Mg(2+). The segment at 242–262 is linker; it reads AQLAAAEEVLYGRIADRLRKS. Residues 263 to 473 are N-acetyltransferase; sequence GVTIRTSARI…KARLKDAAKK (211 aa). Arg-343 and Lys-361 together coordinate UDP-N-acetyl-alpha-D-glucosamine. Residue His-373 is the Proton acceptor of the active site. Residues Tyr-376 and Asn-387 each contribute to the UDP-N-acetyl-alpha-D-glucosamine site. Residues Ala-390, 396–397, Ser-415, Thr-433, and Arg-450 each bind acetyl-CoA; that span reads NY.

The protein in the N-terminal section; belongs to the N-acetylglucosamine-1-phosphate uridyltransferase family. It in the C-terminal section; belongs to the transferase hexapeptide repeat family. Homotrimer. Mg(2+) is required as a cofactor.

The protein localises to the cytoplasm. The catalysed reaction is alpha-D-glucosamine 1-phosphate + acetyl-CoA = N-acetyl-alpha-D-glucosamine 1-phosphate + CoA + H(+). The enzyme catalyses N-acetyl-alpha-D-glucosamine 1-phosphate + UTP + H(+) = UDP-N-acetyl-alpha-D-glucosamine + diphosphate. It participates in nucleotide-sugar biosynthesis; UDP-N-acetyl-alpha-D-glucosamine biosynthesis; N-acetyl-alpha-D-glucosamine 1-phosphate from alpha-D-glucosamine 6-phosphate (route II): step 2/2. Its pathway is nucleotide-sugar biosynthesis; UDP-N-acetyl-alpha-D-glucosamine biosynthesis; UDP-N-acetyl-alpha-D-glucosamine from N-acetyl-alpha-D-glucosamine 1-phosphate: step 1/1. The protein operates within bacterial outer membrane biogenesis; LPS lipid A biosynthesis. Functionally, catalyzes the last two sequential reactions in the de novo biosynthetic pathway for UDP-N-acetylglucosamine (UDP-GlcNAc). The C-terminal domain catalyzes the transfer of acetyl group from acetyl coenzyme A to glucosamine-1-phosphate (GlcN-1-P) to produce N-acetylglucosamine-1-phosphate (GlcNAc-1-P), which is converted into UDP-GlcNAc by the transfer of uridine 5-monophosphate (from uridine 5-triphosphate), a reaction catalyzed by the N-terminal domain. The sequence is that of Bifunctional protein GlmU from Sorangium cellulosum (strain So ce56) (Polyangium cellulosum (strain So ce56)).